A 501-amino-acid chain; its full sequence is Lysine--tRNA ligase (501 aa).

Residues Glu-404 and Glu-411 each coordinate Mg(2+).

This sequence belongs to the class-II aminoacyl-tRNA synthetase family. As to quaternary structure, homodimer. The cofactor is Mg(2+).

The protein resides in the cytoplasm. The enzyme catalyses tRNA(Lys) + L-lysine + ATP = L-lysyl-tRNA(Lys) + AMP + diphosphate. In Campylobacter jejuni subsp. jejuni serotype O:6 (strain 81116 / NCTC 11828), this protein is Lysine--tRNA ligase.